We begin with the raw amino-acid sequence, 466 residues long: Cysteine--tRNA ligase (466 aa).

A Zn(2+)-binding site is contributed by C27. Positions 29–39 (PTVYNFFHIGN) match the 'HIGH' region motif. 3 residues coordinate Zn(2+): C207, H232, and E236. The 'KMSKS' region motif lies at 264–268 (KMSKS). Position 267 (K267) interacts with ATP.

It belongs to the class-I aminoacyl-tRNA synthetase family. In terms of assembly, monomer. Zn(2+) serves as cofactor.

Its subcellular location is the cytoplasm. It carries out the reaction tRNA(Cys) + L-cysteine + ATP = L-cysteinyl-tRNA(Cys) + AMP + diphosphate. This Clostridium beijerinckii (strain ATCC 51743 / NCIMB 8052) (Clostridium acetobutylicum) protein is Cysteine--tRNA ligase.